Consider the following 147-residue polypeptide: Deoxyuridine 5'-triphosphate nucleotidohydrolase (147 aa).

Residues 67–69, N80, and 84–86 contribute to the substrate site; these read RSG and TID.

Belongs to the dUTPase family. Mg(2+) serves as cofactor.

The catalysed reaction is dUTP + H2O = dUMP + diphosphate + H(+). The protein operates within pyrimidine metabolism; dUMP biosynthesis; dUMP from dCTP (dUTP route): step 2/2. Its function is as follows. This enzyme is involved in nucleotide metabolism: it produces dUMP, the immediate precursor of thymidine nucleotides and it decreases the intracellular concentration of dUTP so that uracil cannot be incorporated into DNA. This chain is Deoxyuridine 5'-triphosphate nucleotidohydrolase, found in Anaplasma marginale (strain St. Maries).